Here is a 154-residue protein sequence, read N- to C-terminus: Ribonuclease HI (154 aa).

The RNase H type-1 domain occupies 1-142 (MPKQIEIFTD…CDELAKKGAE (142 aa)). Mg(2+)-binding residues include D10, E48, D70, and D134.

Belongs to the RNase H family. Monomer. Mg(2+) serves as cofactor.

Its subcellular location is the cytoplasm. It carries out the reaction Endonucleolytic cleavage to 5'-phosphomonoester.. Its function is as follows. Endonuclease that specifically degrades the RNA of RNA-DNA hybrids. The polypeptide is Ribonuclease HI (rnhA) (Haemophilus influenzae (strain ATCC 51907 / DSM 11121 / KW20 / Rd)).